The sequence spans 130 residues: Flagellar assembly factor FliW (130 aa).

The protein belongs to the FliW family. In terms of assembly, interacts with translational regulator CsrA and flagellin(s).

The protein resides in the cytoplasm. Acts as an anti-CsrA protein, binds CsrA and prevents it from repressing translation of its target genes, one of which is flagellin. Binds to flagellin and participates in the assembly of the flagellum. The sequence is that of Flagellar assembly factor FliW from Borreliella burgdorferi (strain ATCC 35210 / DSM 4680 / CIP 102532 / B31) (Borrelia burgdorferi).